Here is a 190-residue protein sequence, read N- to C-terminus: Adenine phosphoribosyltransferase (190 aa).

Belongs to the purine/pyrimidine phosphoribosyltransferase family. In terms of assembly, homodimer.

It localises to the cytoplasm. It catalyses the reaction AMP + diphosphate = 5-phospho-alpha-D-ribose 1-diphosphate + adenine. Its pathway is purine metabolism; AMP biosynthesis via salvage pathway; AMP from adenine: step 1/1. In terms of biological role, catalyzes a salvage reaction resulting in the formation of AMP, that is energically less costly than de novo synthesis. In Treponema pallidum (strain Nichols), this protein is Adenine phosphoribosyltransferase.